Consider the following 75-residue polypeptide: Large ribosomal subunit protein bL31 (75 aa).

This sequence belongs to the bacterial ribosomal protein bL31 family. Type A subfamily. In terms of assembly, part of the 50S ribosomal subunit.

Functionally, binds the 23S rRNA. In Sphingopyxis alaskensis (strain DSM 13593 / LMG 18877 / RB2256) (Sphingomonas alaskensis), this protein is Large ribosomal subunit protein bL31.